Consider the following 256-residue polypeptide: Imidazole glycerol phosphate synthase subunit hisF1 (256 aa).

Catalysis depends on residues aspartate 12 and aspartate 131.

Belongs to the HisA/HisF family. Heterodimer of HisH and HisF.

The protein resides in the cytoplasm. It carries out the reaction 5-[(5-phospho-1-deoxy-D-ribulos-1-ylimino)methylamino]-1-(5-phospho-beta-D-ribosyl)imidazole-4-carboxamide + L-glutamine = D-erythro-1-(imidazol-4-yl)glycerol 3-phosphate + 5-amino-1-(5-phospho-beta-D-ribosyl)imidazole-4-carboxamide + L-glutamate + H(+). Its pathway is amino-acid biosynthesis; L-histidine biosynthesis; L-histidine from 5-phospho-alpha-D-ribose 1-diphosphate: step 5/9. Its function is as follows. IGPS catalyzes the conversion of PRFAR and glutamine to IGP, AICAR and glutamate. The HisF subunit catalyzes the cyclization activity that produces IGP and AICAR from PRFAR using the ammonia provided by the HisH subunit. The chain is Imidazole glycerol phosphate synthase subunit hisF1 (hisF1) from Pseudomonas aeruginosa (strain ATCC 15692 / DSM 22644 / CIP 104116 / JCM 14847 / LMG 12228 / 1C / PRS 101 / PAO1).